A 100-amino-acid polypeptide reads, in one-letter code: Small ribosomal subunit protein uS14c (100 aa).

This sequence belongs to the universal ribosomal protein uS14 family. As to quaternary structure, part of the 30S ribosomal subunit.

Its subcellular location is the plastid. It is found in the chloroplast. Functionally, binds 16S rRNA, required for the assembly of 30S particles. The chain is Small ribosomal subunit protein uS14c from Pyropia yezoensis (Susabi-nori).